The primary structure comprises 194 residues: Peptidyl-tRNA hydrolase (194 aa).

Tyr17 contributes to the tRNA binding site. Residue His22 is the Proton acceptor of the active site. 3 residues coordinate tRNA: Phe68, Asn70, and Asn116.

It belongs to the PTH family. In terms of assembly, monomer.

It localises to the cytoplasm. The catalysed reaction is an N-acyl-L-alpha-aminoacyl-tRNA + H2O = an N-acyl-L-amino acid + a tRNA + H(+). Its function is as follows. Hydrolyzes ribosome-free peptidyl-tRNAs (with 1 or more amino acids incorporated), which drop off the ribosome during protein synthesis, or as a result of ribosome stalling. Functionally, catalyzes the release of premature peptidyl moieties from peptidyl-tRNA molecules trapped in stalled 50S ribosomal subunits, and thus maintains levels of free tRNAs and 50S ribosomes. The polypeptide is Peptidyl-tRNA hydrolase (Glaesserella parasuis serovar 5 (strain SH0165) (Haemophilus parasuis)).